The primary structure comprises 339 residues: Glycerol-3-phosphate dehydrogenase [NAD(P)+] (339 aa).

Positions 13, 14, and 108 each coordinate NADPH. Sn-glycerol 3-phosphate-binding residues include K108, G139, and S141. A143 serves as a coordination point for NADPH. K194, D247, S257, R258, and N259 together coordinate sn-glycerol 3-phosphate. Catalysis depends on K194, which acts as the Proton acceptor. R258 contacts NADPH. Residues V282 and E284 each contribute to the NADPH site.

The protein belongs to the NAD-dependent glycerol-3-phosphate dehydrogenase family.

Its subcellular location is the cytoplasm. The catalysed reaction is sn-glycerol 3-phosphate + NAD(+) = dihydroxyacetone phosphate + NADH + H(+). The enzyme catalyses sn-glycerol 3-phosphate + NADP(+) = dihydroxyacetone phosphate + NADPH + H(+). The protein operates within membrane lipid metabolism; glycerophospholipid metabolism. Its function is as follows. Catalyzes the reduction of the glycolytic intermediate dihydroxyacetone phosphate (DHAP) to sn-glycerol 3-phosphate (G3P), the key precursor for phospholipid synthesis. The chain is Glycerol-3-phosphate dehydrogenase [NAD(P)+] from Streptococcus equi subsp. equi (strain 4047).